A 294-amino-acid chain; its full sequence is Thymidylate synthase (294 aa).

Residues R30 and 156 to 157 (RR) contribute to the dUMP site. C176 (nucleophile) is an active-site residue. DUMP contacts are provided by residues 196–199 (RSGD), N207, and 237–239 (HVY). D199 serves as a coordination point for (6R)-5,10-methylene-5,6,7,8-tetrahydrofolate. A293 serves as a coordination point for (6R)-5,10-methylene-5,6,7,8-tetrahydrofolate.

This sequence belongs to the thymidylate synthase family. Homodimer.

The enzyme catalyses dUMP + (6R)-5,10-methylene-5,6,7,8-tetrahydrofolate = 7,8-dihydrofolate + dTMP. It functions in the pathway pyrimidine metabolism; dTTP biosynthesis. The protein is Thymidylate synthase of Ascaris suum (Pig roundworm).